The following is a 546-amino-acid chain: Chaperonin GroEL (546 aa).

ATP is bound by residues 29-32, K50, 86-90, G414, 478-480, and D494; these read TLGP, DGTTT, and NAA.

Belongs to the chaperonin (HSP60) family. In terms of assembly, forms a cylinder of 14 subunits composed of two heptameric rings stacked back-to-back. Interacts with the co-chaperonin GroES.

Its subcellular location is the cytoplasm. The enzyme catalyses ATP + H2O + a folded polypeptide = ADP + phosphate + an unfolded polypeptide.. Together with its co-chaperonin GroES, plays an essential role in assisting protein folding. The GroEL-GroES system forms a nano-cage that allows encapsulation of the non-native substrate proteins and provides a physical environment optimized to promote and accelerate protein folding. This is Chaperonin GroEL from Psychrobacter arcticus (strain DSM 17307 / VKM B-2377 / 273-4).